The following is a 317-amino-acid chain: Melanocyte-stimulating hormone receptor (317 aa).

At 1–37 (MPMQGAQKRLLGSLNSTPTATPNLGLAANHTGAPCLE) the chain is on the extracellular side. Asn29 is a glycosylation site (N-linked (GlcNAc...) asparagine). The chain crosses the membrane as a helical span at residues 38 to 63 (VSIPDGLFLSLGLVSLVENVLVVAAI). Topologically, residues 64 to 72 (AKNRNLHSP) are cytoplasmic. The helical transmembrane segment at 73-93 (MYCFICCLALSDLLVSSSNML) threads the bilayer. Topologically, residues 94 to 118 (ETAVILLLEAGALATRASVVQQLQN) are extracellular. Residues 119-140 (TIDVLTCSSMLCSLCFLGAIAV) traverse the membrane as a helical segment. Residues 141–163 (DRHVSIFYALRYHSIMTLARARR) lie on the Cytoplasmic side of the membrane. Residues 164 to 183 (AIAAIWVASVLSSTLFIAYC) traverse the membrane as a helical segment. Residues 184-191 (DHAXVLLC) lie on the Extracellular side of the membrane. Residues 192 to 211 (LVVFFLAMLVLMAVLYVHML) traverse the membrane as a helical segment. Residues 212–240 (ARACQHAQGITRLHQRQPPAHQGFGFRGA) are Cytoplasmic-facing. Residues 241–266 (ATLTILLGIFFLCWGPFFLHLTLVVL) form a helical membrane-spanning segment. Topologically, residues 267–279 (CPQHLTCSCIFKN) are extracellular. Residues 280–300 (FKVFLTLIICSTIIDPLIYAF) traverse the membrane as a helical segment. The Cytoplasmic portion of the chain corresponds to 301-317 (RSQELRRTLKELLLCSW). A lipid anchor (S-palmitoyl cysteine) is attached at Cys315.

Belongs to the G-protein coupled receptor 1 family. As to quaternary structure, interacts with MGRN1, but does not undergo MGRN1-mediated ubiquitination; this interaction competes with GNAS-binding and thus inhibits agonist-induced cAMP production. Interacts with OPN3; the interaction results in a decrease in MC1R-mediated cAMP signaling and ultimately a decrease in melanin production in melanocytes.

Its subcellular location is the cell membrane. Receptor for MSH (alpha, beta and gamma) and ACTH. The activity of this receptor is mediated by G proteins which activate adenylate cyclase. Mediates melanogenesis, the production of eumelanin (black/brown) and phaeomelanin (red/yellow), via regulation of cAMP signaling in melanocytes. The protein is Melanocyte-stimulating hormone receptor (MC1R) of Ateles paniscus (Black spider monkey).